Consider the following 371-residue polypeptide: Vasopressin V2 receptor (371 aa).

The Extracellular segment spans residues 1–38 (MLLVSTVSAVPGLFSPPSSPSNSSQEELLDDRDPLLVR). Asn22 is a glycosylation site (N-linked (GlcNAc...) asparagine). A helical transmembrane segment spans residues 39–63 (AELALLSTIFVAVALSNGLVLGALI). The Cytoplasmic portion of the chain corresponds to 64–77 (RRGRRGRWAPMHVF). The helical transmembrane segment at 78-98 (ISHLCLADLAVALFQVLPQLA) threads the bilayer. The Extracellular segment spans residues 99–113 (WDATDRFHGPDALCR). The helical transmembrane segment at 114–135 (AVKYLQMVGMYASSYMILAMTL) threads the bilayer. Over 136 to 159 (DRHRAICRPMLAYRHGGGARWNRP) the chain is Cytoplasmic. A helical transmembrane segment spans residues 160-180 (VLVAWAFSLLLSLPQLFIFAQ). Topologically, residues 181–200 (RDVGNGSGVFDCWARFAEPW) are extracellular. Asn185 carries an N-linked (GlcNAc...) asparagine glycan. Residues 201-220 (GLRAYVTWIALMVFVAPALG) traverse the membrane as a helical segment. Over 221–271 (IAACQVLIFREIHASLVPGPSERAGRRRRGRRTGSPSEGAHVSAAMAKTVR) the chain is Cytoplasmic. Residues 240–260 (PSERAGRRRRGRRTGSPSEGA) are disordered. A helical transmembrane segment spans residues 272–293 (MTLVIVIVYVLCWAPFFLVQLW). Residues 294–308 (AAWDPEAPLERPPFV) are Extracellular-facing. Residues 309–328 (LLMLLASLNSCTNPWIYASF) form a helical membrane-spanning segment. Residues 329–371 (SSSVSSELRSLLCCAQRHTTHSLGPQDESCATASSSLMKDTPS) lie on the Cytoplasmic side of the membrane. Residues Cys341 and Cys342 are each lipidated (S-palmitoyl cysteine). The disordered stretch occupies residues 349 to 371 (HSLGPQDESCATASSSLMKDTPS). Positions 357 to 371 (SCATASSSLMKDTPS) are enriched in polar residues.

The protein belongs to the G-protein coupled receptor 1 family. Vasopressin/oxytocin receptor subfamily. In terms of assembly, interacts with ARRDC4. Identified in a complex containing at least ARRDC4, V2R and HGS. Interacts with TMEM147. Kidney.

The protein resides in the cell membrane. Its function is as follows. Receptor for arginine vasopressin. The activity of this receptor is mediated by G proteins which activate adenylate cyclase. Involved in renal water reabsorption. The polypeptide is Vasopressin V2 receptor (Avpr2) (Rattus norvegicus (Rat)).